Here is a 404-residue protein sequence, read N- to C-terminus: Formate-dependent phosphoribosylglycinamide formyltransferase (404 aa).

N(1)-(5-phospho-beta-D-ribosyl)glycinamide is bound by residues 25–26 (EL) and Glu85. Residues Arg118, Lys159, 164–169 (SSGKGQ), 199–202 (EGFI), and Glu207 contribute to the ATP site. An ATP-grasp domain is found at 123 to 318 (RLAAEELGLA…EFELHARAIL (196 aa)). Residues Glu277 and Glu289 each coordinate Mg(2+). N(1)-(5-phospho-beta-D-ribosyl)glycinamide is bound by residues Asp296, Lys365, and 372 to 373 (RR).

This sequence belongs to the PurK/PurT family. As to quaternary structure, homodimer.

The enzyme catalyses N(1)-(5-phospho-beta-D-ribosyl)glycinamide + formate + ATP = N(2)-formyl-N(1)-(5-phospho-beta-D-ribosyl)glycinamide + ADP + phosphate + H(+). It functions in the pathway purine metabolism; IMP biosynthesis via de novo pathway; N(2)-formyl-N(1)-(5-phospho-D-ribosyl)glycinamide from N(1)-(5-phospho-D-ribosyl)glycinamide (formate route): step 1/1. Functionally, involved in the de novo purine biosynthesis. Catalyzes the transfer of formate to 5-phospho-ribosyl-glycinamide (GAR), producing 5-phospho-ribosyl-N-formylglycinamide (FGAR). Formate is provided by PurU via hydrolysis of 10-formyl-tetrahydrofolate. This Burkholderia vietnamiensis (strain G4 / LMG 22486) (Burkholderia cepacia (strain R1808)) protein is Formate-dependent phosphoribosylglycinamide formyltransferase.